A 248-amino-acid chain; its full sequence is Ribosomal RNA small subunit methyltransferase G (248 aa).

S-adenosyl-L-methionine is bound by residues Gly93, Leu98, Ala143 to Glu144, and Arg161.

It belongs to the methyltransferase superfamily. RNA methyltransferase RsmG family.

Its subcellular location is the cytoplasm. Functionally, specifically methylates the N7 position of guanine in position 518 of 16S rRNA. The chain is Ribosomal RNA small subunit methyltransferase G from Mycobacterium leprae (strain Br4923).